Reading from the N-terminus, the 496-residue chain is Cytochrome P450 71D95 (496 aa).

The helical; Signal-anchor transmembrane segment at 2 to 22 (ELQISSAIIILVATFVASLLI) threads the bilayer. A heme-binding site is contributed by Cys-436.

It belongs to the cytochrome P450 family. The cofactor is heme.

Its subcellular location is the endoplasmic reticulum membrane. It carries out the reaction (4S)-limonene + reduced [NADPH--hemoprotein reductase] + O2 = (1S,6R)-isopiperitenol + oxidized [NADPH--hemoprotein reductase] + H2O + H(+). In terms of biological role, hydroxylates both (+)- and (-)-limonene to (+) and (-)-trans-isopiperitenol. In Mentha spicata (Spearmint), this protein is Cytochrome P450 71D95 (CYP71D95).